We begin with the raw amino-acid sequence, 382 residues long: uncharacterized protein (382 aa).

The next 11 helical transmembrane spans lie at 8-28 (VMLLLCGLLLLTLAIAVLNTL), 45-65 (MVSSSYFTGNLVGTLFTGYLI), 75-95 (YLASLIFAAGCVGLGGMVGFW), 102-122 (FIAGIGCAMIWVVVESALMCS), 131-151 (LLAAYMMAYYMGTFLGQLLVS), 157-177 (LLHVLPWVTGMILAGILPLLF), 204-224 (LGVNGCIISGIVLGSLYGLMP), 231-251 (GMANASIGFWMAVLVSAGILG), 274-294 (VVILGSIAMLTQAAMAPALFI), 325-345 (ALLLSYTVGSLLGPSFAAMLM), and 349-369 (SDNLLFIMIASVSFIYLLMLL).

The protein belongs to the major facilitator superfamily. YcaD (TC 2.A.1.26) family.

Its subcellular location is the cell inner membrane. This is an uncharacterized protein from Salmonella gallinarum (strain 287/91 / NCTC 13346).